Here is a 163-residue protein sequence, read N- to C-terminus: Cytochrome b6-f complex subunit 4 (163 aa).

Helical transmembrane passes span 36 to 56 (LLYI…GLAV), 95 to 115 (LLGV…PFLE), and 131 to 151 (TVFL…TLPI).

The protein belongs to the cytochrome b family. PetD subfamily. As to quaternary structure, the 4 large subunits of the cytochrome b6-f complex are cytochrome b6, subunit IV (17 kDa polypeptide, petD), cytochrome f and the Rieske protein, while the 4 small subunits are petG, petL, petM and petN. The complex functions as a dimer.

It is found in the plastid. The protein resides in the chloroplast thylakoid membrane. In terms of biological role, component of the cytochrome b6-f complex, which mediates electron transfer between photosystem II (PSII) and photosystem I (PSI), cyclic electron flow around PSI, and state transitions. The chain is Cytochrome b6-f complex subunit 4 from Phalaenopsis aphrodite subsp. formosana (Moth orchid).